The following is a 94-amino-acid chain: ATP synthase subunit c (94 aa).

2 helical membrane passes run 15–35 (VSVG…WGLI) and 61–81 (GGLM…FIFA).

This sequence belongs to the ATPase C chain family. F-type ATPases have 2 components, F(1) - the catalytic core - and F(0) - the membrane proton channel. F(1) has five subunits: alpha(3), beta(3), gamma(1), delta(1), epsilon(1). F(0) has three main subunits: a(1), b(2) and c(10-14). The alpha and beta chains form an alternating ring which encloses part of the gamma chain. F(1) is attached to F(0) by a central stalk formed by the gamma and epsilon chains, while a peripheral stalk is formed by the delta and b chains.

It localises to the cell inner membrane. F(1)F(0) ATP synthase produces ATP from ADP in the presence of a proton or sodium gradient. F-type ATPases consist of two structural domains, F(1) containing the extramembraneous catalytic core and F(0) containing the membrane proton channel, linked together by a central stalk and a peripheral stalk. During catalysis, ATP synthesis in the catalytic domain of F(1) is coupled via a rotary mechanism of the central stalk subunits to proton translocation. In terms of biological role, key component of the F(0) channel; it plays a direct role in translocation across the membrane. A homomeric c-ring of between 10-14 subunits forms the central stalk rotor element with the F(1) delta and epsilon subunits. The protein is ATP synthase subunit c of Nitrosococcus oceani (strain ATCC 19707 / BCRC 17464 / JCM 30415 / NCIMB 11848 / C-107).